The chain runs to 64 residues: DNA-directed RNA polymerase subunit Rpo10 (64 aa).

Zn(2+) is bound by residues Cys7, Cys10, Cys45, and Cys46.

The protein belongs to the archaeal Rpo10/eukaryotic RPB10 RNA polymerase subunit family. Part of the RNA polymerase complex. Zn(2+) is required as a cofactor.

It is found in the cytoplasm. The catalysed reaction is RNA(n) + a ribonucleoside 5'-triphosphate = RNA(n+1) + diphosphate. Its function is as follows. DNA-dependent RNA polymerase (RNAP) catalyzes the transcription of DNA into RNA using the four ribonucleoside triphosphates as substrates. The polypeptide is DNA-directed RNA polymerase subunit Rpo10 (Halorubrum lacusprofundi (strain ATCC 49239 / DSM 5036 / JCM 8891 / ACAM 34)).